The following is a 509-amino-acid chain: CDK5RAP3 protein homolog (509 aa).

The protein belongs to the CDK5RAP3 family.

The protein resides in the nucleus. It is found in the cytoplasm. Functionally, substrate adapter of E3 ligase complexes mediating ufmylation, the covalent attachment of the ubiquitin-like modifier UFM1 to substrate proteins, and which is involved in various processes, such as ribosome recycling and reticulophagy (also called ER-phagy). The protein is CDK5RAP3 protein homolog of Drosophila melanogaster (Fruit fly).